A 114-amino-acid chain; its full sequence is Ribonuclease P protein component (114 aa).

It belongs to the RnpA family. As to quaternary structure, consists of a catalytic RNA component (M1 or rnpB) and a protein subunit.

The enzyme catalyses Endonucleolytic cleavage of RNA, removing 5'-extranucleotides from tRNA precursor.. RNaseP catalyzes the removal of the 5'-leader sequence from pre-tRNA to produce the mature 5'-terminus. It can also cleave other RNA substrates such as 4.5S RNA. The protein component plays an auxiliary but essential role in vivo by binding to the 5'-leader sequence and broadening the substrate specificity of the ribozyme. The sequence is that of Ribonuclease P protein component from Legionella pneumophila (strain Paris).